The following is a 195-amino-acid chain: Ribonuclease HII (195 aa).

Residues 1–195 form the RNase H type-2 domain; the sequence is MICGIDEAGR…SWRTLRYLNT (195 aa). A divalent metal cation-binding residues include Asp-6, Glu-7, and Asp-101.

This sequence belongs to the RNase HII family. Mn(2+) is required as a cofactor. Requires Mg(2+) as cofactor.

It localises to the cytoplasm. It carries out the reaction Endonucleolytic cleavage to 5'-phosphomonoester.. Its function is as follows. Endonuclease that specifically degrades the RNA of RNA-DNA hybrids. The protein is Ribonuclease HII of Pyrobaculum islandicum (strain DSM 4184 / JCM 9189 / GEO3).